Consider the following 244-residue polypeptide: Probable phosphatase NT01CX_1282 (244 aa).

Residues His-8, His-10, His-16, His-41, Glu-74, His-102, His-132, Asp-193, and His-195 each coordinate Zn(2+).

It belongs to the PHP family. Requires Zn(2+) as cofactor.

In Clostridium novyi (strain NT), this protein is Probable phosphatase NT01CX_1282.